The primary structure comprises 156 residues: Small ribosomal subunit protein uS7 (156 aa).

It belongs to the universal ribosomal protein uS7 family. In terms of assembly, part of the 30S ribosomal subunit. Contacts proteins S9 and S11.

Functionally, one of the primary rRNA binding proteins, it binds directly to 16S rRNA where it nucleates assembly of the head domain of the 30S subunit. Is located at the subunit interface close to the decoding center, probably blocks exit of the E-site tRNA. This is Small ribosomal subunit protein uS7 from Arthrobacter sp. (strain FB24).